Here is a 77-residue protein sequence, read N- to C-terminus: U10-lycotoxin-Ls1b (77 aa).

An N-terminal signal peptide occupies residues 1–20 (MKLIIFTGLVLFAIVSLIEA). A propeptide spanning residues 21–26 (EEESGR) is cleaved from the precursor.

It belongs to the neurotoxin 19 (CSTX) family. 09 (U10-Lctx) subfamily. Post-translationally, contains 4 disulfide bonds. As to expression, expressed by the venom gland.

Its subcellular location is the secreted. The polypeptide is U10-lycotoxin-Ls1b (Lycosa singoriensis (Wolf spider)).